Here is a 205-residue protein sequence, read N- to C-terminus: Holliday junction branch migration complex subunit RuvA (205 aa).

The tract at residues 1-64 is domain I; sequence MIGRLRGTLA…EDAHLLYGFA (64 aa). Residues 65-143 are domain II; that stretch reads EKRERELFRE…AWETSPAMFT (79 aa). The segment at 144-154 is flexible linker; the sequence is LVSDGPLPVAS. The interval 154–205 is domain III; the sequence is SESSAEADAVSALVSLGYKPQEASKAIAAIKDKAGLSSEELIRRSLKGMIAK.

It belongs to the RuvA family. Homotetramer. Forms an RuvA(8)-RuvB(12)-Holliday junction (HJ) complex. HJ DNA is sandwiched between 2 RuvA tetramers; dsDNA enters through RuvA and exits via RuvB. An RuvB hexamer assembles on each DNA strand where it exits the tetramer. Each RuvB hexamer is contacted by two RuvA subunits (via domain III) on 2 adjacent RuvB subunits; this complex drives branch migration. In the full resolvosome a probable DNA-RuvA(4)-RuvB(12)-RuvC(2) complex forms which resolves the HJ.

It is found in the cytoplasm. Functionally, the RuvA-RuvB-RuvC complex processes Holliday junction (HJ) DNA during genetic recombination and DNA repair, while the RuvA-RuvB complex plays an important role in the rescue of blocked DNA replication forks via replication fork reversal (RFR). RuvA specifically binds to HJ cruciform DNA, conferring on it an open structure. The RuvB hexamer acts as an ATP-dependent pump, pulling dsDNA into and through the RuvAB complex. HJ branch migration allows RuvC to scan DNA until it finds its consensus sequence, where it cleaves and resolves the cruciform DNA. The protein is Holliday junction branch migration complex subunit RuvA of Pseudomonas entomophila (strain L48).